We begin with the raw amino-acid sequence, 585 residues long: Eukaryotic translation initiation factor 3 subunit D (585 aa).

Residues 43–60 (LGRMADWTGDGKDRDRGG) show a composition bias toward basic and acidic residues. Disordered regions lie at residues 43–62 (LGRMADWTGDGKDRDRGGRQ) and 109–152 (RGGG…NRSA). Residues 109–130 (RGGGTVFRGRGQRGVGQRGGRA) are compositionally biased toward gly residues. The RNA gate stretch occupies residues 300–314 (SIDLVTVNENAADAP). The interval 560 to 585 (VPPNTFEEDDEAAEEQEEKAEEESEE) is disordered. Acidic residues predominate over residues 565-585 (FEEDDEAAEEQEEKAEEESEE).

It belongs to the eIF-3 subunit D family. In terms of assembly, component of the eukaryotic translation initiation factor 3 (eIF-3) complex.

It is found in the cytoplasm. In terms of biological role, mRNA cap-binding component of the eukaryotic translation initiation factor 3 (eIF-3) complex, which is involved in protein synthesis of a specialized repertoire of mRNAs and, together with other initiation factors, stimulates binding of mRNA and methionyl-tRNAi to the 40S ribosome. The eIF-3 complex specifically targets and initiates translation of a subset of mRNAs involved in cell proliferation. In the eIF-3 complex, eif3d specifically recognizes and binds the 7-methylguanosine cap of a subset of mRNAs. The polypeptide is Eukaryotic translation initiation factor 3 subunit D (Neosartorya fischeri (strain ATCC 1020 / DSM 3700 / CBS 544.65 / FGSC A1164 / JCM 1740 / NRRL 181 / WB 181) (Aspergillus fischerianus)).